The sequence spans 132 residues: Small ribosomal subunit protein uS8 (132 aa).

It belongs to the universal ribosomal protein uS8 family. Part of the 30S ribosomal subunit. Contacts proteins S5 and S12.

Functionally, one of the primary rRNA binding proteins, it binds directly to 16S rRNA central domain where it helps coordinate assembly of the platform of the 30S subunit. The polypeptide is Small ribosomal subunit protein uS8 (Paramagnetospirillum magneticum (strain ATCC 700264 / AMB-1) (Magnetospirillum magneticum)).